The primary structure comprises 176 residues: NAD(P)H-quinone oxidoreductase subunit 6, chloroplastic (176 aa).

5 consecutive transmembrane segments (helical) span residues 10–30 (FLLV…VLLP), 33–53 (IYSA…YILL), 61–81 (AQLL…VMFM), 92–112 (LWTI…ISLI), and 152–172 (FFLP…GAIA).

The protein belongs to the complex I subunit 6 family. As to quaternary structure, NDH is composed of at least 16 different subunits, 5 of which are encoded in the nucleus.

It is found in the plastid. The protein localises to the chloroplast thylakoid membrane. It carries out the reaction a plastoquinone + NADH + (n+1) H(+)(in) = a plastoquinol + NAD(+) + n H(+)(out). The catalysed reaction is a plastoquinone + NADPH + (n+1) H(+)(in) = a plastoquinol + NADP(+) + n H(+)(out). In terms of biological role, NDH shuttles electrons from NAD(P)H:plastoquinone, via FMN and iron-sulfur (Fe-S) centers, to quinones in the photosynthetic chain and possibly in a chloroplast respiratory chain. The immediate electron acceptor for the enzyme in this species is believed to be plastoquinone. Couples the redox reaction to proton translocation, and thus conserves the redox energy in a proton gradient. This chain is NAD(P)H-quinone oxidoreductase subunit 6, chloroplastic (ndhG), found in Coffea arabica (Arabian coffee).